Reading from the N-terminus, the 372-residue chain is Ligninase A (372 aa).

Residues 1-21 form the signal peptide; the sequence is MAFKQLVAAISLALSLTTANA. A propeptide spanning residues 22–28 is cleaved from the precursor; that stretch reads AVVKEKR. 4 disulfide bridges follow: Cys-31-Cys-43, Cys-42-Cys-313, Cys-62-Cys-148, and Cys-277-Cys-345. Residue His-75 is the Proton acceptor of the active site. The Ca(2+) site is built by Asp-76, Gly-94, Asp-96, and Ser-98. His-204 is a binding site for heme b. Residues Ser-205, Asp-222, Thr-224, Ile-227, and Asp-229 each coordinate Ca(2+). Asn-285 carries N-linked (GlcNAc...) asparagine glycosylation.

Belongs to the peroxidase family. Ligninase subfamily. The cofactor is heme b. Ca(2+) is required as a cofactor.

It catalyses the reaction 1-(3,4-dimethoxyphenyl)-2-(2-methoxyphenoxy)propane-1,3-diol + H2O2 = 3,4-dimethoxybenzaldehyde + guaiacol + glycolaldehyde + H2O. The catalysed reaction is 2 (3,4-dimethoxyphenyl)methanol + H2O2 = 2 (3,4-dimethoxyphenyl)methanol radical + 2 H2O. It participates in secondary metabolite metabolism; lignin degradation. Functionally, depolymerization of lignin. Catalyzes the C(alpha)-C(beta) cleavage of the propyl side chains of lignin. The protein is Ligninase A (LIPA) of Phanerodontia chrysosporium (White-rot fungus).